Here is a 196-residue protein sequence, read N- to C-terminus: RNA-free ribonuclease P (196 aa).

Belongs to the HARP family.

It catalyses the reaction Endonucleolytic cleavage of RNA, removing 5'-extranucleotides from tRNA precursor.. RNA-free RNase P that catalyzes the removal of the 5'-leader sequence from pre-tRNA to produce the mature 5'-terminus. This Thermodesulfovibrio yellowstonii (strain ATCC 51303 / DSM 11347 / YP87) protein is RNA-free ribonuclease P.